Consider the following 192-residue polypeptide: Glutaredoxin-C9 (192 aa).

Residues 89–191 (YERVARMASG…PLLKQAGALW (103 aa)) enclose the Glutaredoxin domain. C109 and C112 form a disulfide bridge. The Responsive for interaction with TGA factors motif lies at 189–192 (ALWL).

This sequence belongs to the glutaredoxin family. CC-type subfamily.

The protein localises to the cytoplasm. It is found in the nucleus. Its function is as follows. Has a glutathione-disulfide oxidoreductase activity in the presence of NADPH and glutathione reductase. Reduces low molecular weight disulfides and proteins. The protein is Glutaredoxin-C9 (GRXC9) of Oryza sativa subsp. japonica (Rice).